Consider the following 1197-residue polypeptide: PAN2-PAN3 deadenylation complex catalytic subunit PAN2 (1197 aa).

4 WD repeats span residues 153-193 (DEAE…QKYT), 195-231 (EVPGITIMRQSNRFFFCGHTSGKVSLRDLRTFVVEHE), 244-280 (VHGNLLVTCGFSSRMNGLACDRFLKVYDLRMMRATTP), and 328-367 (TVGPLIMTFDVSASKQALAFGDSEGCVHLWADSPEVTFNT). The linker stretch occupies residues 368-485 (YSRETDFALP…IGREEEPHLY (118 aa)). A USP domain is found at 486–919 (MVAKKYRKVT…VPAILYYARR (434 aa)). The region spanning 970-1142 (VGLDAEFVTL…EDARTALQLY (173 aa)) is the Exonuclease domain. A divalent metal cation contacts are provided by Asp-973, Glu-975, Asp-1082, and Asp-1134. Positions 1176-1197 (VPEPDSQSSPKHGAVFPPVLAL) are disordered.

The protein belongs to the peptidase C19 family. PAN2 subfamily. Forms a heterotrimer with an asymmetric homodimer of the regulatory subunit PAN3 to form the poly(A)-nuclease (PAN) deadenylation complex. Requires a divalent metal cation as cofactor.

It is found in the cytoplasm. It localises to the P-body. Its subcellular location is the nucleus. The enzyme catalyses Exonucleolytic cleavage of poly(A) to 5'-AMP.. With respect to regulation, positively regulated by the regulatory subunit PAN3. Catalytic subunit of the poly(A)-nuclease (PAN) deadenylation complex, one of two cytoplasmic mRNA deadenylases involved in general and miRNA-mediated mRNA turnover. PAN specifically shortens poly(A) tails of RNA and the activity is stimulated by poly(A)-binding protein (PABP). PAN deadenylation is followed by rapid degradation of the shortened mRNA tails by the CCR4-NOT complex. Deadenylated mRNAs are then degraded by two alternative mechanisms, namely exosome-mediated 3'-5' exonucleolytic degradation, or deadenylation-dependent mRNA decaping and subsequent 5'-3' exonucleolytic degradation by XRN1. In Gallus gallus (Chicken), this protein is PAN2-PAN3 deadenylation complex catalytic subunit PAN2.